Consider the following 523-residue polypeptide: MVRAKRTKRDSATNIYRTCKQAGTCPPDVINKVEQSTIADNILKYGSAGVFFGGLGISTGRGTGGTTGYVPLGEGTGVRVGSTPTVVRPALVPEVIGPADLLPVDTIAPVDPASSSIVPLTESSGVDLLPGEIETIAEVHPIPDVPTFDTPVVTTSKGSSAILEVAPEPTPPTRVRVSRTQYHNPAFHIITESTPSQGESSLSDEIIVASGAGGQSVGVSENIELQDLSNRYSFEIETPTPPRRSSTPLQRATQAFRQRSLTNRRLLQQVPVEDPLFLTQPSKLVRFAFENPAFEEEVTQVFEQDLAGFVEPPNRDFLDIAELGRPRFSETREGYVRLSRLGRRATIRTRAGTQIGAQVHFYKDLSSINTEAPIELDLLGQHSGDATIVHGTVESTFIDTNIEENPLAEQMELEIDTYPEAHSFDALLDEATDDFSGSQLVIGNRRSTTSYTVPRFESPRNSSYYVQDLQGYYVAYPESRDKIELIYPSPTLPAVVIHTEDSSGDFYLHPSLLQRRRRKRKYL.

The Nuclear localization signal motif lies at 1-10 (MVRAKRTKRD). Cys-19 and Cys-25 are oxidised to a cystine. The Nuclear localization signal signature appears at 514 to 522 (QRRRRKRKY).

It belongs to the papillomaviridae L2 protein family. Interacts with major capsid protein L1. Interacts with E2; this interaction inhibits E2 transcriptional activity but not the DNA replication function E2. Interacts with host GADD45GIP1. Interacts with host HSPA8; this interaction is required for L2 nuclear translocation. Interacts with host importins KPNB2 and KPNB3. Forms a complex with importin alpha2-beta1 heterodimers via interaction with the importin alpha2 adapter. Interacts with host DYNLT1; this interaction is essential for virus intracellular transport during entry. Interacts (via C-terminus) with host retromer subunits VPS35 and VPS29. Post-translationally, highly phosphorylated.

It is found in the virion. The protein localises to the host nucleus. Its subcellular location is the host early endosome. The protein resides in the host Golgi apparatus. Functionally, minor protein of the capsid that localizes along the inner surface of the virion, within the central cavities beneath the L1 pentamers. Plays a role in capsid stabilization through interaction with the major capsid protein L1. Once the virion enters the host cell, L2 escorts the genomic DNA into the nucleus by promoting escape from the endosomal compartments and traffic through the host Golgi network. Mechanistically, the C-terminus of L2 possesses a cell-penetrating peptide that protudes from the host endosome, interacts with host cytoplasmic retromer cargo and thereby mediates the capsid delivery to the host trans-Golgi network. Plays a role through its interaction with host dynein in the intracellular microtubule-dependent transport of viral capsid toward the nucleus. Mediates the viral genome import into the nucleus through binding to host importins. Once within the nucleus, L2 localizes viral genomes to host PML bodies in order to activate early gene expression for establishment of infection. Later on, promotes late gene expression by interacting with the viral E2 protein and by inhibiting its transcriptional activation functions. During virion assembly, encapsidates the genome by direct interaction with the viral DNA. This Homo sapiens (Human) protein is Minor capsid protein L2.